A 232-amino-acid chain; its full sequence is Ion-translocating oxidoreductase complex subunit E (232 aa).

6 helical membrane passes run 18 to 38, 39 to 59, 69 to 89, 93 to 113, 128 to 148, and 182 to 202; these read GLVQLLGLCPLLAVTATLTNA, LGLGLATVAVLIGSNVLVSLV, IPVFVMIIAALVTVVQLVINA, GLYLSLGIFLPLIVTNCVIIG, AFDGLMMGTGFTAVLAVLGAV, and SFLLAMLPPGAFIAMGLLIAG.

Belongs to the NqrDE/RnfAE family. In terms of assembly, the complex is composed of six subunits: RnfA, RnfB, RnfC, RnfD, RnfE and RnfG.

It is found in the cell inner membrane. Its function is as follows. Part of a membrane-bound complex that couples electron transfer with translocation of ions across the membrane. This chain is Ion-translocating oxidoreductase complex subunit E, found in Shewanella amazonensis (strain ATCC BAA-1098 / SB2B).